Reading from the N-terminus, the 100-residue chain is MTISSNENSASLRAQIQQCLVESGNYEAISNELTERLLKDGWLDEVKKLAREEISQEDSPNFSKALSQIEPQALDLVQQSTKDAIMRKITAFLEEIVETE.

Belongs to the ENY2 family. In terms of assembly, component of the nuclear pore complex (NPC)-associated TREX-2 complex (transcription and export complex 2), composed of at least SUS1, SAC3, THP1, SEM1, and CDC31. TREX-2 contains 2 SUS1 chains. The TREX-2 complex interacts with the nucleoporin NUP1. Component of the 1.8 MDa SAGA transcription coactivator-HAT complex. SAGA is built of 5 distinct domains with specialized functions. Within the SAGA complex, SUS1, SGF11, SGF73 and UBP8 form an additional subcomplex of SAGA called the DUB module (deubiquitination module). Interacts directly with THP1, SAC3, SGF11, and with the RNA polymerase II.

The protein localises to the nucleus. It is found in the nucleoplasm. Its subcellular location is the cytoplasm. The protein resides in the P-body. Its function is as follows. Involved in mRNA export coupled transcription activation by association with both the TREX-2 and the SAGA complexes. At the promoters, SAGA is required for recruitment of the basal transcription machinery. It influences RNA polymerase II transcriptional activity through different activities such as TBP interaction and promoter selectivity, interaction with transcription activators, and chromatin modification through histone acetylation and deubiquitination. Within the SAGA complex, participates in a subcomplex required for deubiquitination of H2B and for the maintenance of steady-state H3 methylation levels. The TREX-2 complex functions in docking export-competent ribonucleoprotein particles (mRNPs) to the nuclear entrance of the nuclear pore complex (nuclear basket). TREX-2 participates in mRNA export and accurate chromatin positioning in the nucleus by tethering genes to the nuclear periphery. May also be involved in cytoplasmic mRNA decay by interaction with components of P-bodies. The sequence is that of Transcription and mRNA export factor SUS1 from Candida glabrata (strain ATCC 2001 / BCRC 20586 / JCM 3761 / NBRC 0622 / NRRL Y-65 / CBS 138) (Yeast).